The sequence spans 78 residues: UPF0335 protein A1C_00850 (78 aa).

This sequence belongs to the UPF0335 family.

The chain is UPF0335 protein A1C_00850 from Rickettsia akari (strain Hartford).